Reading from the N-terminus, the 431-residue chain is O-phosphoseryl-tRNA(Sec) selenium transferase (431 aa).

Residues 1-36 (MRGLIPDHMLERGRTVLDSYREPVERLLSERRMPEE) form a tetramerization region. Arginine 67 contributes to the pyridoxal 5'-phosphate binding site. The phosphate loop (P-loop) stretch occupies residues 88 to 98 (GRSGTLVDPQP). Residues arginine 89, serine 90, and glutamine 97 each coordinate substrate. N6-(pyridoxal phosphate)lysine is present on lysine 269. Substrate is bound at residue arginine 298.

The protein belongs to the SepSecS family. In terms of assembly, homotetramer. Pyridoxal 5'-phosphate is required as a cofactor.

The catalysed reaction is O-phospho-L-seryl-tRNA(Sec) + selenophosphate + H2O = L-selenocysteinyl-tRNA(Sec) + 2 phosphate. The protein operates within aminoacyl-tRNA biosynthesis; selenocysteinyl-tRNA(Sec) biosynthesis; selenocysteinyl-tRNA(Sec) from L-seryl-tRNA(Sec) (archaeal/eukaryal route): step 2/2. Its function is as follows. Converts O-phosphoseryl-tRNA(Sec) to selenocysteinyl-tRNA(Sec) required for selenoprotein biosynthesis. The chain is O-phosphoseryl-tRNA(Sec) selenium transferase (spcS) from Methanopyrus kandleri (strain AV19 / DSM 6324 / JCM 9639 / NBRC 100938).